Consider the following 407-residue polypeptide: Nuclear hormone receptor family member nhr-134 (407 aa).

The NR C4-type zinc finger occupies 11–31 (CEICGQKTSGRHFGVMSCRSC). The NR C4-type; degenerate zinc finger occupies 47–66 (RCPNGNCKLLENGKFKCKKC). The NR LBD domain occupies 157–407 (QFHNSLERLA…FSEPDMFEST (251 aa)).

This sequence belongs to the nuclear hormone receptor family.

The protein localises to the nucleus. In terms of biological role, orphan nuclear receptor. This is Nuclear hormone receptor family member nhr-134 (nhr-134) from Caenorhabditis elegans.